Reading from the N-terminus, the 296-residue chain is uncharacterized protein (296 aa).

Positions 1–20 (MKKLLLIIITVFFAFNVAQA) are cleaved as a signal peptide.

This is an uncharacterized protein from Rickettsia felis (strain ATCC VR-1525 / URRWXCal2) (Rickettsia azadi).